Reading from the N-terminus, the 68-residue chain is Galectin-10 (68 aa).

The 68-residue stretch at 1-68 (EPYLQVDFHT…LSISVLPDKY (68 aa)) folds into the Galectin domain.

As to quaternary structure, interacts with CEL.

Its subcellular location is the cytoplasm. It is found in the cytosol. It localises to the cytoplasmic granule. Regulates immune responses through the recognition of cell-surface glycans. Essential for the anergy and suppressive function of CD25-positive regulatory T-cells (Treg). In Pongo pygmaeus (Bornean orangutan), this protein is Galectin-10 (CLC).